We begin with the raw amino-acid sequence, 473 residues long: MTKNIGKITQIISAVVDVKFTNNGELPEILNALECYNDKHRIVLEVAQHIGDDTVRCIAMDSMEGLVRGVEVIDTGSPIRIPVGTETLGRIMNVVGEPIDGKGDIKSSNISSIYKPAPDFTNQSTERNILVTGIKVIDLLAPYTKGGKIGLFGGAGVGKTVLIMELINNVAKAHGGYTVFAGVGERTREGNDLYHEMIDSGVINLAEPEKSKVALVYGQMNEPPGARARVALSGLTIAESFRDMNEGQDVLFFVDNIFRFTQAGSEVSALLGRIPSAVGYQPTLATDMGELQERITSTKYGSITSVQAIYVPADDLTDPAPATSFAHLDATTVLSRQIAEFGIYPAVDPLDSNSQVLDPMIVGEEHYSVARQVQQVLQTYKSLQDIITILGMDELSEEDKLTVARARKIQRFLSQPFHVAEVFTGAAGKFVNLADTIAGFKGLVEGKYDDLPEAAFYMVGTIDEAIEKAQTLK.

153–160 (GGAGVGKT) serves as a coordination point for ATP.

Belongs to the ATPase alpha/beta chains family. As to quaternary structure, F-type ATPases have 2 components, CF(1) - the catalytic core - and CF(0) - the membrane proton channel. CF(1) has five subunits: alpha(3), beta(3), gamma(1), delta(1), epsilon(1). CF(0) has three main subunits: a(1), b(2) and c(9-12). The alpha and beta chains form an alternating ring which encloses part of the gamma chain. CF(1) is attached to CF(0) by a central stalk formed by the gamma and epsilon chains, while a peripheral stalk is formed by the delta and b chains.

Its subcellular location is the cell membrane. It carries out the reaction ATP + H2O + 4 H(+)(in) = ADP + phosphate + 5 H(+)(out). Functionally, produces ATP from ADP in the presence of a proton gradient across the membrane. The catalytic sites are hosted primarily by the beta subunits. The chain is ATP synthase subunit beta from Rickettsia africae (strain ESF-5).